The following is a 332-amino-acid chain: 5-dehydro-2-deoxygluconokinase (332 aa).

Belongs to the carbohydrate kinase PfkB family.

It carries out the reaction 5-dehydro-2-deoxy-D-gluconate + ATP = 6-phospho-5-dehydro-2-deoxy-D-gluconate + ADP + H(+). It functions in the pathway polyol metabolism; myo-inositol degradation into acetyl-CoA; acetyl-CoA from myo-inositol: step 5/7. Its function is as follows. Catalyzes the phosphorylation of 5-dehydro-2-deoxy-D-gluconate (2-deoxy-5-keto-D-gluconate or DKG) to 6-phospho-5-dehydro-2-deoxy-D-gluconate (DKGP). In Bacillus thuringiensis subsp. konkukian (strain 97-27), this protein is 5-dehydro-2-deoxygluconokinase.